The following is a 203-amino-acid chain: Glycerol-3-phosphate acyltransferase (203 aa).

5 helical membrane passes run 10-30 (LLAL…GLLI), 59-79 (PAAA…VILA), 87-107 (AAQI…YLKF), 116-136 (FFGT…AIWL), and 168-188 (LVVL…ENII).

This sequence belongs to the PlsY family. As to quaternary structure, probably interacts with PlsX.

The protein localises to the cell inner membrane. It catalyses the reaction an acyl phosphate + sn-glycerol 3-phosphate = a 1-acyl-sn-glycero-3-phosphate + phosphate. The protein operates within lipid metabolism; phospholipid metabolism. Catalyzes the transfer of an acyl group from acyl-phosphate (acyl-PO(4)) to glycerol-3-phosphate (G3P) to form lysophosphatidic acid (LPA). This enzyme utilizes acyl-phosphate as fatty acyl donor, but not acyl-CoA or acyl-ACP. This is Glycerol-3-phosphate acyltransferase from Dinoroseobacter shibae (strain DSM 16493 / NCIMB 14021 / DFL 12).